The chain runs to 161 residues: ATP synthase subunit b (161 aa).

The chain crosses the membrane as a helical span at residues 1 to 21 (MYLNATILGQVIAFILFVWFC).

It belongs to the ATPase B chain family. F-type ATPases have 2 components, F(1) - the catalytic core - and F(0) - the membrane proton channel. F(1) has five subunits: alpha(3), beta(3), gamma(1), delta(1), epsilon(1). F(0) has three main subunits: a(1), b(2) and c(10-14). The alpha and beta chains form an alternating ring which encloses part of the gamma chain. F(1) is attached to F(0) by a central stalk formed by the gamma and epsilon chains, while a peripheral stalk is formed by the delta and b chains.

It localises to the cell inner membrane. Its function is as follows. F(1)F(0) ATP synthase produces ATP from ADP in the presence of a proton or sodium gradient. F-type ATPases consist of two structural domains, F(1) containing the extramembraneous catalytic core and F(0) containing the membrane proton channel, linked together by a central stalk and a peripheral stalk. During catalysis, ATP synthesis in the catalytic domain of F(1) is coupled via a rotary mechanism of the central stalk subunits to proton translocation. Functionally, component of the F(0) channel, it forms part of the peripheral stalk, linking F(1) to F(0). The polypeptide is ATP synthase subunit b (Blochmanniella floridana).